Here is a 508-residue protein sequence, read N- to C-terminus: Bifunctional purine biosynthesis protein PurH (508 aa).

In terms of domain architecture, MGS-like spans 1 to 145 (MIKRALLSTY…KNYKDVIVVV (145 aa)).

The protein belongs to the PurH family.

The catalysed reaction is (6R)-10-formyltetrahydrofolate + 5-amino-1-(5-phospho-beta-D-ribosyl)imidazole-4-carboxamide = 5-formamido-1-(5-phospho-D-ribosyl)imidazole-4-carboxamide + (6S)-5,6,7,8-tetrahydrofolate. The enzyme catalyses IMP + H2O = 5-formamido-1-(5-phospho-D-ribosyl)imidazole-4-carboxamide. The protein operates within purine metabolism; IMP biosynthesis via de novo pathway; 5-formamido-1-(5-phospho-D-ribosyl)imidazole-4-carboxamide from 5-amino-1-(5-phospho-D-ribosyl)imidazole-4-carboxamide (10-formyl THF route): step 1/1. Its pathway is purine metabolism; IMP biosynthesis via de novo pathway; IMP from 5-formamido-1-(5-phospho-D-ribosyl)imidazole-4-carboxamide: step 1/1. The polypeptide is Bifunctional purine biosynthesis protein PurH (Petrotoga mobilis (strain DSM 10674 / SJ95)).